The chain runs to 1173 residues: MTRRCMPARPGFPSSPAPGSSPPRCHLRPGSTAHAAAGKRTESPGDRKQSIIDFFKPASKQDRHMLDSPQKSNIKYGGSRLSITGTEQFERKLSSPKESKPKRVPPEKSPIIEAFMKGVKEHHEDHGIHESRRPCLSLASKYLAKGTNIYVPSSYHLPKEMKSLKKKHRSPERRKSLFIHENNEKNDRDRGKTNADSKKQTTVAEADIFNNSSRSLSSRSSLSRHHPEESPLGAKFQLSLASYCRERELKRLRKEQMEQRINSENSFSEASSLSLKSSIERKYKPRQEQRKQNDIIPGKNNLSNVENGHLSRKRSSSDSWEPTSAGSKQNKFPEKRKRNSVDSDLKSTRESMIPKARESFLEKRPDGPHQKEKFIKHIALKTPGDVLRLEDISKEPSDETDGSSAGLAPSNSGNSGHHSTRNSDQIQVAGTKETKMQKPHLPLSQEKSAIKKASNLQKNKTASSTTKEKETKLPLLSRVPSAGSSLVPLNAKNCALPVSKKDKERSSSKECSGHSTESTKHKEHKAKTNKADSNVSSGKISGGPLRSEYGTPTKSPPAALEVVPCIPSPAAPSDKAPSEGESSGNSNAGSSALKRKLRGDFDSDEESLGYNLDSDEEEETLKSLEEIMALNFNQTPAATGKPPALSKGLRSQSSDYTGHVHPGTYTNTLERLVKEMEDTQRLDELQKQLQEDIRQGRGIKSPIRIGEEDSTDDEDGLLEEHKEFLKKFSVTIDAIPDHHPGEEIFNFLNSGKIFNQYTLDLRDSGFIGQSAVEKLILKSGKTDQIFLTTQGFLTSAYHYVQCPVPVLKWLFRMMSVHTDCIVSVQILSTLMEITIRNDTFSDSPVWPWIPSLSDVAAVFFNMGIDFRSLFPLENLQPDFNEDYLVSETQTTSRGKESEDSSYKPIFSTLPETNILNVVKFLGLCTSIHPEGYQDREIMLLILMLFKMSLEKQLKQIPLVDFQSLLINLMKNIRDWNTKVPELCLGINELSSHPHNLLWLVQLVPNWTSRGRQLRQCLSLVIISKLLDEKHEDVPNASNLQVSVLHRYLVQMKPSDLLKKMVLKKKAEQPDGIIDDSLHLELEKQAYYLTYILLHLVGEVSCSHSFSSGQRKHFVLLCGALEKHVKCDIREDARLFYRTKVKDLVARIHGKWQEIIQNCRPTQGQLHDFWVPDS.

The interval methionine 1 to serine 109 is disordered. 2 stretches are compositionally biased toward basic and acidic residues: residues lysine 39–serine 50 and glutamine 88–proline 106. The short motif at serine 137–isoleucine 149 is the APIM motif element. Disordered stretches follow at residues methionine 161 to serine 230, glutamine 256 to leucine 275, glutamate 280 to lysine 373, lysine 394 to threonine 620, and threonine 635 to glycine 663. The span at glutamate 181–lysine 199 shows a compositional bias: basic and acidic residues. 2 stretches are compositionally biased toward low complexity: residues serine 212–serine 221 and asparagine 262–leucine 275. The span at glutamate 280–asparagine 293 shows a compositional bias: basic and acidic residues. A compositionally biased stretch (polar residues) spans serine 317–asparagine 330. 2 stretches are compositionally biased toward basic and acidic residues: residues asparagine 339–arginine 349 and lysine 355–lysine 373. Polar residues predominate over residues proline 409–valine 428. A Phosphoserine modification is found at serine 481. Residues serine 499–lysine 520 are compositionally biased toward basic and acidic residues. Residues alanine 571 to alanine 592 are compositionally biased toward low complexity. Residues aspartate 602–glutamate 619 are compositionally biased toward acidic residues. Phosphoserine is present on residues serine 603, serine 607, and serine 614. The tract at residues threonine 635–serine 1173 is interaction with SIMC1. Residues threonine 664–histidine 1166 are NSE6-like domain. Positions proline 702–serine 1173 are required for interaction with SLF1 and RAD18.

Belongs to the FAM178 family. In terms of assembly, forms a heterodimer with SIMC1. Interacts with SLF1 (via N-terminus); this interaction links RAD18 to the SMC5-SMC6 complex. Interacts with RAD18; this interaction is increased in a SLF1-dependent manner. Interacts with SMC5 and SMC6. As to expression, widely expressed. Expressed at higher level in skeletal muscle and at slightly lower level in brain, liver and heart, than in lung, kidney, spleen and thymus.

It is found in the nucleus. The protein localises to the PML body. Plays a role in the DNA damage response (DDR) pathway by regulating postreplication repair of UV-damaged DNA and genomic stability maintenance. The SLF1-SLF2 complex acts to link RAD18 with the SMC5-SMC6 complex at replication-coupled interstrand cross-links (ICL) and DNA double-strand breaks (DSBs) sites on chromatin during DNA repair in response to stalled replication forks. Promotes the recruitment of the SMC5-SMC6 complex to DNA lesions. Plays a role in SMC5-SMC6 complex recruitment for viral restriction. Forms a complex with SIMC1 and this complex is required to recruit SMC5-SMC6 complex to PML nuclear bodies and sites of viral replication. This Homo sapiens (Human) protein is SMC5-SMC6 complex localization factor protein 2.